The following is a 290-amino-acid chain: Cilia- and flagella-associated protein 298 (290 aa).

The protein belongs to the CFAP298 family. Interacts with ZMYND10.

It is found in the cytoplasm. The protein localises to the cytoskeleton. Its subcellular location is the cilium basal body. In terms of biological role, plays a role in motile cilium function, possibly by acting on outer dynein arm assembly. Seems to be important for initiation rather than maintenance of cilium motility. Required for correct positioning of cilia at the apical cell surface, suggesting an additional role in the planar cell polarity (PCP) pathway. May suppress canonical Wnt signaling activity. This is Cilia- and flagella-associated protein 298 from Mus musculus (Mouse).